A 113-amino-acid polypeptide reads, in one-letter code: ATP-dependent Clp protease adapter protein ClpS (113 aa).

The tract at residues methionine 1–threonine 24 is disordered.

Belongs to the ClpS family. As to quaternary structure, binds to the N-terminal domain of the chaperone ClpA.

Involved in the modulation of the specificity of the ClpAP-mediated ATP-dependent protein degradation. This chain is ATP-dependent Clp protease adapter protein ClpS, found in Ruegeria pomeroyi (strain ATCC 700808 / DSM 15171 / DSS-3) (Silicibacter pomeroyi).